A 139-amino-acid polypeptide reads, in one-letter code: Peptide methionine sulfoxide reductase B5 (139 aa).

Position 2 is an N-acetylalanine (Ala-2). In terms of domain architecture, MsrB spans 12-133; that stretch reads EEEWRAVLSP…NSVSISFNPA (122 aa). Residues Cys-51, Cys-54, Cys-97, and Cys-100 each coordinate Zn(2+). Residues Cys-69 and Cys-122 are joined by a disulfide bond. The Nucleophile role is filled by Cys-122.

The protein belongs to the MsrB Met sulfoxide reductase family. The cofactor is Zn(2+).

The protein resides in the cytoplasm. Its subcellular location is the cytosol. The catalysed reaction is L-methionyl-[protein] + [thioredoxin]-disulfide + H2O = L-methionyl-(R)-S-oxide-[protein] + [thioredoxin]-dithiol. Its function is as follows. Catalyzes the reduction of methionine sulfoxide (MetSO) to methionine in proteins. Plays a protective role against oxidative stress by restoring activity to proteins that have been inactivated by methionine oxidation. MSRB family specifically reduces the MetSO R-enantiomer. This chain is Peptide methionine sulfoxide reductase B5 (MSRB5), found in Arabidopsis thaliana (Mouse-ear cress).